The primary structure comprises 180 residues: Large ribosomal subunit protein uL5 (180 aa).

Belongs to the universal ribosomal protein uL5 family. Part of the 50S ribosomal subunit; part of the 5S rRNA/L5/L18/L25 subcomplex. Contacts the 5S rRNA and the P site tRNA. Forms a bridge to the 30S subunit in the 70S ribosome.

In terms of biological role, this is one of the proteins that bind and probably mediate the attachment of the 5S RNA into the large ribosomal subunit, where it forms part of the central protuberance. In the 70S ribosome it contacts protein S13 of the 30S subunit (bridge B1b), connecting the 2 subunits; this bridge is implicated in subunit movement. Contacts the P site tRNA; the 5S rRNA and some of its associated proteins might help stabilize positioning of ribosome-bound tRNAs. The protein is Large ribosomal subunit protein uL5 of Streptococcus sanguinis (strain SK36).